The primary structure comprises 106 residues: MCNCKKNIKVDESYVSFKDIDCFENACLVIDNLLRILKEPKNTNAYWEKFIEKIPEAYYTRDSKKDPSEALLYLVCSCTSNIMELFEEIDDEEAIDAMSKCEQECC.

This sequence belongs to the CowN family.

Its function is as follows. Is required to sustain N(2)-dependent growth in the presence of low levels of carbon monoxide (CO). Probably acts by protecting the N(2) fixation ability of the nitrogenase complex, which is inactivated in the presence of CO. The chain is N(2)-fixation sustaining protein CowN from Denitrovibrio acetiphilus (strain DSM 12809 / NBRC 114555 / N2460).